We begin with the raw amino-acid sequence, 157 residues long: Large ribosomal subunit protein uL11 (157 aa).

This sequence belongs to the universal ribosomal protein uL11 family. As to quaternary structure, part of the ribosomal stalk of the 50S ribosomal subunit. Interacts with L10 and the large rRNA to form the base of the stalk. L10 forms an elongated spine to which L12 dimers bind in a sequential fashion forming a multimeric L10(L12)X complex.

Its function is as follows. Forms part of the ribosomal stalk which helps the ribosome interact with GTP-bound translation factors. The polypeptide is Large ribosomal subunit protein uL11 (Methanocorpusculum labreanum (strain ATCC 43576 / DSM 4855 / Z)).